The following is a 146-amino-acid chain: Probable actin-related protein 2/3 complex subunit 5 (146 aa).

Belongs to the ARPC5 family. Component of the Arp2/3 complex composed of ARP2, ARP3, ARPC1B/p41-ARC, ARPC2/p34-ARC, ARPC3/p21-ARC, ARPC4/p20-ARC and ARPC5/p16-ARC.

Its subcellular location is the cytoplasm. The protein resides in the cytoskeleton. Its function is as follows. Functions as a component of the Arp2/3 complex which is involved in regulation of actin polymerization and together with an activating nucleation-promoting factor (NPF) mediates the formation of branched actin networks. This chain is Probable actin-related protein 2/3 complex subunit 5, found in Caenorhabditis elegans.